A 643-amino-acid polypeptide reads, in one-letter code: uncharacterized protein (643 aa).

The chain crosses the membrane as a helical span at residues Ile9–Lys29.

It is found in the membrane. This is an uncharacterized protein from Methanocaldococcus jannaschii (strain ATCC 43067 / DSM 2661 / JAL-1 / JCM 10045 / NBRC 100440) (Methanococcus jannaschii).